Reading from the N-terminus, the 275-residue chain is Large ribosomal subunit protein uL2c (275 aa).

Residues 224–275 are disordered; that stretch reads AMNPVDHPHGGGEGRTPIGRKKPVTPWGYSALGKKSRKRNRYSDASILRRRE.

Belongs to the universal ribosomal protein uL2 family. As to quaternary structure, part of the 50S ribosomal subunit.

Its subcellular location is the plastid. The protein resides in the chloroplast. The chain is Large ribosomal subunit protein uL2c (rpl2) from Picea abies (Norway spruce).